The chain runs to 178 residues: Sec-independent protein translocase protein TatB (178 aa).

Residues 2–22 (LPEIGAAELLIIAAVALIVVG) form a helical membrane-spanning segment. Residues 104–178 (HSPTGYENTV…KARKTAGSAE (75 aa)) form a disordered region. Over residues 114-131 (EPPPPEPEPQPAAEPAPK) the composition is skewed to pro residues. Low complexity predominate over residues 141–154 (PKAAAAPKAAAKPK).

Belongs to the TatB family. The Tat system comprises two distinct complexes: a TatABC complex, containing multiple copies of TatA, TatB and TatC subunits, and a separate TatA complex, containing only TatA subunits. Substrates initially bind to the TatABC complex, which probably triggers association of the separate TatA complex to form the active translocon.

Its subcellular location is the cell inner membrane. In terms of biological role, part of the twin-arginine translocation (Tat) system that transports large folded proteins containing a characteristic twin-arginine motif in their signal peptide across membranes. Together with TatC, TatB is part of a receptor directly interacting with Tat signal peptides. TatB may form an oligomeric binding site that transiently accommodates folded Tat precursor proteins before their translocation. This is Sec-independent protein translocase protein TatB from Phenylobacterium zucineum (strain HLK1).